A 155-amino-acid polypeptide reads, in one-letter code: Interleukin-2 (155 aa).

An N-terminal signal peptide occupies residues 1 to 20 (MYSRQLASCVALALVLLANS). A glycan (O-linked (GalNAc...) threonine) is linked at threonine 23. A disulfide bridge links cysteine 78 with cysteine 126.

This sequence belongs to the IL-2 family.

It localises to the secreted. Cytokine produced by activated CD4-positive helper T-cells and to a lesser extend activated CD8-positive T-cells and natural killer (NK) cells that plays pivotal roles in the immune response and tolerance. Binds to a receptor complex composed of either the high-affinity trimeric IL-2R (IL2RA/CD25, IL2RB/CD122 and IL2RG/CD132) or the low-affinity dimeric IL-2R (IL2RB and IL2RG). Interaction with the receptor leads to oligomerization and conformation changes in the IL-2R subunits resulting in downstream signaling starting with phosphorylation of JAK1 and JAK3. In turn, JAK1 and JAK3 phosphorylate the receptor to form a docking site leading to the phosphorylation of several substrates including STAT5. This process leads to activation of several pathways including STAT, phosphoinositide-3-kinase/PI3K and mitogen-activated protein kinase/MAPK pathways. Functions as a T-cell growth factor and can increase NK-cell cytolytic activity as well. Promotes strong proliferation of activated B-cells and subsequently immunoglobulin production. Plays a pivotal role in regulating the adaptive immune system by controlling the survival and proliferation of regulatory T-cells, which are required for the maintenance of immune tolerance. Moreover, participates in the differentiation and homeostasis of effector T-cell subsets, including Th1, Th2, Th17 as well as memory CD8-positive T-cells. The sequence is that of Interleukin-2 (IL2) from Meriones unguiculatus (Mongolian jird).